The primary structure comprises 415 residues: Multidrug resistance protein MdtA (415 aa).

The N-terminal stretch at 1-21 is a signal peptide; it reads MKSTVKKRGWVIAGIVVVALA. The segment at 387–415 is disordered; that stretch reads AQTAADAAKPERGERAPTDSARAAKGARS. Over residues 394-403 the composition is skewed to basic and acidic residues; that stretch reads AKPERGERAP.

This sequence belongs to the membrane fusion protein (MFP) (TC 8.A.1) family. In terms of assembly, part of a tripartite efflux system composed of MdtA, MdtB and MdtC.

Its subcellular location is the cell inner membrane. The polypeptide is Multidrug resistance protein MdtA (Cronobacter turicensis (strain DSM 18703 / CCUG 55852 / LMG 23827 / z3032)).